Consider the following 69-residue polypeptide: uncharacterized protein (69 aa).

2 helical membrane passes run 7–29 (LLSG…LGSI) and 44–66 (ALQV…LGLL).

The protein resides in the cell membrane. This is an uncharacterized protein from Archaeoglobus fulgidus (strain ATCC 49558 / DSM 4304 / JCM 9628 / NBRC 100126 / VC-16).